Consider the following 292-residue polypeptide: 2-(5''-triphosphoribosyl)-3'-dephosphocoenzyme-A synthase (292 aa).

This sequence belongs to the CitG/MdcB family.

It catalyses the reaction 3'-dephospho-CoA + ATP = 2'-(5''-triphospho-alpha-D-ribosyl)-3'-dephospho-CoA + adenine. Catalyzes the formation of 2-(5''-triphosphoribosyl)-3'-dephosphocoenzyme-A, the precursor of the prosthetic group of the holo-acyl carrier protein (gamma chain) of citrate lyase, from ATP and dephospho-CoA. This Escherichia coli O6:K15:H31 (strain 536 / UPEC) protein is 2-(5''-triphosphoribosyl)-3'-dephosphocoenzyme-A synthase.